The sequence spans 155 residues: Protein SREK1IP1 (155 aa).

A CCHC-type zinc finger spans residues 13 to 30 (AGCKKCGYPGHLTFECRN). The tract at residues 44 to 155 (VSSTSSEDSD…TPNSSEFSRK (112 aa)) is disordered. Ser52 is subject to Phosphoserine. The segment covering 66–84 (QEKRINEEEEKKKEKSKEK) has biased composition (basic and acidic residues). Basic residues predominate over residues 85–94 (IKLKKKRKRS). Ser96 and Ser97 each carry phosphoserine. A compositionally biased stretch (basic residues) spans 107–142 (QKKQKYQKKEKKKEKKSKSKKGKHHKKEKKKRKKEK). Thr146 carries the post-translational modification Phosphothreonine. Residues 146-155 (TPNSSEFSRK) show a composition bias toward polar residues.

Interacts with SREK1/SFRS12.

Its function is as follows. Possible splicing regulator involved in the control of cellular survival. The protein is Protein SREK1IP1 (SREK1IP1) of Homo sapiens (Human).